A 145-amino-acid polypeptide reads, in one-letter code: Transcription antitermination protein NusB (145 aa).

It belongs to the NusB family.

In terms of biological role, involved in transcription antitermination. Required for transcription of ribosomal RNA (rRNA) genes. Binds specifically to the boxA antiterminator sequence of the ribosomal RNA (rrn) operons. The chain is Transcription antitermination protein NusB from Burkholderia ambifaria (strain MC40-6).